A 333-amino-acid chain; its full sequence is Glycerol-3-phosphate dehydrogenase [NAD(P)+] (333 aa).

The NADPH site is built by W12, H31, and K105. Sn-glycerol 3-phosphate-binding residues include K105, G134, and S136. Position 138 (A138) interacts with NADPH. Residues K189, D242, S252, R253, and N254 each contribute to the sn-glycerol 3-phosphate site. The active-site Proton acceptor is K189. R253 is a binding site for NADPH. Positions 278 and 280 each coordinate NADPH.

This sequence belongs to the NAD-dependent glycerol-3-phosphate dehydrogenase family.

Its subcellular location is the cytoplasm. It catalyses the reaction sn-glycerol 3-phosphate + NAD(+) = dihydroxyacetone phosphate + NADH + H(+). The catalysed reaction is sn-glycerol 3-phosphate + NADP(+) = dihydroxyacetone phosphate + NADPH + H(+). Its pathway is membrane lipid metabolism; glycerophospholipid metabolism. Functionally, catalyzes the reduction of the glycolytic intermediate dihydroxyacetone phosphate (DHAP) to sn-glycerol 3-phosphate (G3P), the key precursor for phospholipid synthesis. This is Glycerol-3-phosphate dehydrogenase [NAD(P)+] from Brachyspira hyodysenteriae (strain ATCC 49526 / WA1).